The sequence spans 258 residues: Tryptophan synthase alpha chain (258 aa).

Active-site proton acceptor residues include Glu47 and Asp58.

It belongs to the TrpA family. In terms of assembly, tetramer of two alpha and two beta chains.

It catalyses the reaction (1S,2R)-1-C-(indol-3-yl)glycerol 3-phosphate + L-serine = D-glyceraldehyde 3-phosphate + L-tryptophan + H2O. The protein operates within amino-acid biosynthesis; L-tryptophan biosynthesis; L-tryptophan from chorismate: step 5/5. Its function is as follows. The alpha subunit is responsible for the aldol cleavage of indoleglycerol phosphate to indole and glyceraldehyde 3-phosphate. The chain is Tryptophan synthase alpha chain from Bacillus cereus (strain ATCC 14579 / DSM 31 / CCUG 7414 / JCM 2152 / NBRC 15305 / NCIMB 9373 / NCTC 2599 / NRRL B-3711).